A 332-amino-acid polypeptide reads, in one-letter code: MAVEPLRVLVTGAAGQIGYALVPMIARGIMLGANQPVILHMLDIPPAAEALNGVKMELVDAAFPLLKGVVATTDAAEACKGVNVAVMVGGFPRKEGMERKDVMSKNVSIYKAQASALEQHAAPNCKVLVVANPANTNALILKEFAPSIPEKNISCLTRLDHNRALGQISERLNVQVSDVKNVIIWGNHSSTQYPDVNHATVKTQGVDKPVRELVADDAWLNGEFITTVQQRGAAIIKARKLSSALSAASSACDHIHDWVLGTPEGTWVSMGVYSDGSYNVPAGIIYSFPVTCKNGEWTIVQGLPIDDDSRKKMDATAAELVEEKTLAYSCLT.

NAD(+) contacts are provided by residues 16 to 17 (QI), Asp43, and Gly90. Position 99 (Arg99) interacts with oxaloacetate. NAD(+) contacts are provided by Gln113 and Asn132. Oxaloacetate-binding residues include Asn132, Arg163, His188, and Ser243. His188 (proton acceptor) is an active-site residue.

This sequence belongs to the LDH/MDH superfamily. MDH type 2 family. As to quaternary structure, homodimer.

It is found in the cytoplasm. It catalyses the reaction (S)-malate + NAD(+) = oxaloacetate + NADH + H(+). The polypeptide is Malate dehydrogenase, cytoplasmic (MDH) (Mesembryanthemum crystallinum (Common ice plant)).